The chain runs to 144 residues: Large ribosomal subunit protein uL15 (144 aa).

The interval 1–56 is disordered; the sequence is MELNTLAPAPGAKSSKKRVGRGIGSGLGKTGGRGHKGQKSRSGGSVKPGFEGGQMP. Positions 21-31 are enriched in gly residues; it reads RGIGSGLGKTG.

The protein belongs to the universal ribosomal protein uL15 family. Part of the 50S ribosomal subunit.

In terms of biological role, binds to the 23S rRNA. This is Large ribosomal subunit protein uL15 from Idiomarina loihiensis (strain ATCC BAA-735 / DSM 15497 / L2-TR).